Consider the following 225-residue polypeptide: Peptidyl-tRNA hydrolase (225 aa).

Tyrosine 14 contacts tRNA. The active-site Proton acceptor is histidine 19. 3 residues coordinate tRNA: phenylalanine 64, asparagine 66, and asparagine 112. A disordered region spans residues 187–225; sequence MQPPKPEKPKGEAKPAAPEAPEAAPDTRSALQRLADRFR. The span at 200 to 210 shows a compositional bias: low complexity; it reads KPAAPEAPEAA.

The protein belongs to the PTH family. As to quaternary structure, monomer.

The protein resides in the cytoplasm. The enzyme catalyses an N-acyl-L-alpha-aminoacyl-tRNA + H2O = an N-acyl-L-amino acid + a tRNA + H(+). Hydrolyzes ribosome-free peptidyl-tRNAs (with 1 or more amino acids incorporated), which drop off the ribosome during protein synthesis, or as a result of ribosome stalling. Functionally, catalyzes the release of premature peptidyl moieties from peptidyl-tRNA molecules trapped in stalled 50S ribosomal subunits, and thus maintains levels of free tRNAs and 50S ribosomes. The chain is Peptidyl-tRNA hydrolase from Cereibacter sphaeroides (strain ATCC 17025 / ATH 2.4.3) (Rhodobacter sphaeroides).